Reading from the N-terminus, the 129-residue chain is Small ribosomal subunit protein uS11 (129 aa).

Belongs to the universal ribosomal protein uS11 family. In terms of assembly, part of the 30S ribosomal subunit. Interacts with proteins S7 and S18. Binds to IF-3.

Its function is as follows. Located on the platform of the 30S subunit, it bridges several disparate RNA helices of the 16S rRNA. Forms part of the Shine-Dalgarno cleft in the 70S ribosome. In Escherichia fergusonii (strain ATCC 35469 / DSM 13698 / CCUG 18766 / IAM 14443 / JCM 21226 / LMG 7866 / NBRC 102419 / NCTC 12128 / CDC 0568-73), this protein is Small ribosomal subunit protein uS11.